We begin with the raw amino-acid sequence, 578 residues long: Vacuolar protein 8 (578 aa).

A lipid anchor (N-myristoyl glycine) is attached at G2. 3 S-palmitoyl cysteine lipidation sites follow: C4, C5, and C7. 2 positions are modified to phosphoserine: S11 and S16. ARM repeat units lie at residues 37 to 75 (DKDQ…AEIT), 76 to 114 (EKYV…NLAV), 116 to 155 (NENK…NLAT), 157 to 196 (DDNK…NMTH), 198 to 237 (EENR…NIAV), 239 to 280 (EANR…NLAS), 282 to 321 (TSYQ…NISI), 323 to 363 (PLNE…NLAA), and 407 to 446 (DVSK…NLCS). Residue K77 forms a Glycyl lysine isopeptide (Lys-Gly) (interchain with G-Cter in ubiquitin) linkage. A Glycyl lysine isopeptide (Lys-Gly) (interchain with G-Cter in ubiquitin) cross-link involves residue K515. Residues 527–557 (SGIDVKNPGSNNNPSSNDNNSNNNDTGSEHQ) form a disordered region. Residues 533–552 (NPGSNNNPSSNDNNSNNNDT) are compositionally biased toward low complexity.

This sequence belongs to the beta-catenin family. In terms of assembly, interacts with NVJ1. Forms heterotetramers of two VAC8 and two NVJ1 or two VAC8 and two ATG13. Post-translationally, palmitoylated on one or more of its N-terminal cysteine residues by PFA3, which is required for vacuole fusion.

It localises to the vacuole membrane. Its function is as follows. Functions in both vacuole inheritance and protein targeting from the cytoplasm to vacuole (cvt). Involved in the formation of nucleus-vacuole junctions (NVJs) during piecemeal microautophagy of the nucleus (PMN). NVJs are interorganelle interfaces mediated by NVJ1 in the nuclear envelope and VAC8 on the vacuole membrane. Together, NVJ1 and VAC8 form Velcro-like patches through which teardrop-like portions of the nucleus are pinched off into the vacuolar lumen and degraded by the PMN process. The polypeptide is Vacuolar protein 8 (VAC8) (Saccharomyces cerevisiae (strain ATCC 204508 / S288c) (Baker's yeast)).